Here is a 416-residue protein sequence, read N- to C-terminus: Na(+)/H(+) antiporter NhaA (416 aa).

11 consecutive transmembrane segments (helical) span residues Gly-39–Ala-59, Leu-82–Ile-102, Leu-119–Val-139, Gly-146–Gly-166, Val-175–Phe-195, Gly-198–Leu-218, Ala-234–Leu-254, Pro-281–Gly-301, Leu-315–Ala-335, Trp-353–Ile-373, and Gly-390–Gln-410.

Belongs to the NhaA Na(+)/H(+) (TC 2.A.33) antiporter family.

Its subcellular location is the cell inner membrane. The catalysed reaction is Na(+)(in) + 2 H(+)(out) = Na(+)(out) + 2 H(+)(in). In terms of biological role, na(+)/H(+) antiporter that extrudes sodium in exchange for external protons. The protein is Na(+)/H(+) antiporter NhaA of Acidovorax sp. (strain JS42).